Reading from the N-terminus, the 239-residue chain is uncharacterized protein (239 aa).

The interval 193–214 is disordered; the sequence is RKRKLNLSDGENKAKSPYSSIS.

It is found in the nucleus. This is an uncharacterized protein from Schizosaccharomyces pombe (strain 972 / ATCC 24843) (Fission yeast).